The sequence spans 115 residues: Photosystem II reaction center Psb28 protein (115 aa).

It belongs to the Psb28 family. As to quaternary structure, part of the photosystem II complex.

The protein resides in the plastid. The protein localises to the chloroplast thylakoid membrane. The sequence is that of Photosystem II reaction center Psb28 protein from Cyanidium caldarium (Red alga).